The primary structure comprises 857 residues: Dimethylglycine dehydrogenase, mitochondrial (857 aa).

The transit peptide at 1–43 directs the protein to the mitochondrion; it reads MLRLGALRLRGLALRSSQGRPSSAGLREGQESPPSPPEWKDRA. Residues 15–39 are disordered; sequence RSSQGRPSSAGLREGQESPPSPPEW. Residues 52 to 53, 73 to 74, and 80 to 88 each bind FAD; these read CV, EK, and GSTWHAAGL. H84 is subject to Tele-8alpha-FAD histidine. K107 carries the N6-acetyllysine modification. An N6-acetyllysine; alternate modification is found at K141. K141 carries the N6-succinyllysine; alternate modification. An N6-acetyllysine modification is found at K161. An FAD-binding site is contributed by V212. K216 carries the N6-acetyllysine modification. W244 contributes to the FAD binding site. K310 and K312 each carry N6-succinyllysine. N6-acetyllysine occurs at positions 328 and 353. 390-395 contributes to the FAD binding site; that stretch reads FGYGII. K427, K469, and K516 each carry N6-acetyllysine; alternate. N6-succinyllysine; alternate is present on residues K427, K469, and K516. 573–575 is a (6S)-5,6,7,8-tetrahydrofolate binding site; sequence ELT. K648 carries the N6-acetyllysine; alternate modification. K648 carries the post-translational modification N6-succinyllysine; alternate. (6S)-5,6,7,8-tetrahydrofolate is bound by residues Y669, 676-678, and Y737; that span reads ELY. Position 757 is an N6-acetyllysine (K757). N6-acetyllysine; alternate is present on K786. The residue at position 786 (K786) is an N6-succinyllysine; alternate. K788 is subject to N6-succinyllysine.

The protein belongs to the GcvT family. FAD serves as cofactor.

The protein resides in the mitochondrion. The enzyme catalyses (6S)-5,6,7,8-tetrahydrofolyl-(gamma-L-Glu)(n) + N,N-dimethylglycine + oxidized [electron-transfer flavoprotein] + H(+) = (6R)-5,10-methylenetetrahydrofolyl-(gamma-L-Glu)(n) + sarcosine + reduced [electron-transfer flavoprotein]. It participates in amine and polyamine degradation; betaine degradation; sarcosine from betaine: step 2/2. Functionally, catalyzes the demethylation of N,N-dimethylglycine to sarcosine. Also has activity with sarcosine in vitro. This is Dimethylglycine dehydrogenase, mitochondrial (Dmgdh) from Rattus norvegicus (Rat).